Reading from the N-terminus, the 309-residue chain is Methionyl-tRNA formyltransferase (309 aa).

Serine 109–proline 112 is a binding site for (6S)-5,6,7,8-tetrahydrofolate.

It belongs to the Fmt family.

The enzyme catalyses L-methionyl-tRNA(fMet) + (6R)-10-formyltetrahydrofolate = N-formyl-L-methionyl-tRNA(fMet) + (6S)-5,6,7,8-tetrahydrofolate + H(+). Functionally, attaches a formyl group to the free amino group of methionyl-tRNA(fMet). The formyl group appears to play a dual role in the initiator identity of N-formylmethionyl-tRNA by promoting its recognition by IF2 and preventing the misappropriation of this tRNA by the elongation apparatus. This chain is Methionyl-tRNA formyltransferase, found in Clostridium botulinum (strain Alaska E43 / Type E3).